The primary structure comprises 465 residues: Soluble pyridine nucleotide transhydrogenase (465 aa).

36 to 45 (ERYDNVGGGC) provides a ligand contact to FAD.

Belongs to the class-I pyridine nucleotide-disulfide oxidoreductase family. It depends on FAD as a cofactor.

The protein resides in the cytoplasm. It carries out the reaction NAD(+) + NADPH = NADH + NADP(+). Its function is as follows. Conversion of NADPH, generated by peripheral catabolic pathways, to NADH, which can enter the respiratory chain for energy generation. This is Soluble pyridine nucleotide transhydrogenase from Sodalis glossinidius (strain morsitans).